Here is a 328-residue protein sequence, read N- to C-terminus: Alpha-tubulin N-acetyltransferase 2 (328 aa).

One can recognise an N-acetyltransferase domain in the interval 5-185 (SQVALLPKLS…NNFVVFHRYF (181 aa)). Acetyl-CoA-binding positions include 119-132 (FFVD…GFGK) and 155-164 (SVKFLAFLRK). 2 disordered regions span residues 219–261 (EYQS…PGKK) and 282–328 (GGDP…TPEH). Positions 238–248 (TPPPPLPPPLV) are enriched in pro residues. Residues 312-328 (PTRSGVQYNIISGTPEH) are compositionally biased toward polar residues.

The protein belongs to the acetyltransferase ATAT1 family.

The enzyme catalyses L-lysyl-[alpha-tubulin] + acetyl-CoA = N(6)-acetyl-L-lysyl-[alpha-tubulin] + CoA + H(+). Specifically acetylates 'Lys-40' in alpha-tubulin on the lumenal side of microtubules. Promotes microtubule destabilization and accelerates microtubule dynamics; this activity may be independent of acetylation activity. Acetylates alpha-tubulin with a slow enzymatic rate, due to a catalytic site that is not optimized for acetyl transfer. Enters the microtubule through each end and diffuses quickly throughout the lumen of microtubules. Acetylates only long/old microtubules because of its slow acetylation rate since it does not have time to act on dynamically unstable microtubules before the enzyme is released. This chain is Alpha-tubulin N-acetyltransferase 2, found in Trypanosoma cruzi (strain CL Brener).